A 170-amino-acid polypeptide reads, in one-letter code: MASVPAPATTTAAVILCLCVVLSCAAADDPNLPDYVIQGRVYCDTCRAGFVTNVTEYIAGAKVRLECKHFGTGKLERAIDGVTDATGTYTIELKDSHEEDICQVVLVASPRKDCDEVQALRDRAGVLLTRNVGISDSLRPANPLGYFKDVPLPVCAALLKQLDSDDDDDQ.

Positions 1 to 27 (MASVPAPATTTAAVILCLCVVLSCAAA) are cleaved as a signal peptide. 3 disulfide bridges follow: Cys43/Cys114, Cys46/Cys155, and Cys67/Cys102. Asn53 is a glycosylation site (N-linked (GlcNAc...) asparagine).

The protein belongs to the Ole e I family. In terms of tissue distribution, pollen.

The sequence is that of Pollen-specific protein C13 (MGS1) from Zea mays (Maize).